A 195-amino-acid chain; its full sequence is Interferon tau (195 aa).

A signal peptide spans 1–23; it reads MAFMLSLLMALVLVSYGLGGSLG. Disulfide bonds link cysteine 52/cysteine 162 and cysteine 87/cysteine 109.

This sequence belongs to the alpha/beta interferon family. IFN-alphaII subfamily.

Its subcellular location is the secreted. Paracrine hormone primarily responsible for maternal recognition of pregnancy. Interacts with endometrial receptors, probably type I interferon receptors, and blocks estrogen receptor expression, preventing the estrogen-induced increase in oxytocin receptor expression in the endometrium. This results in the suppression of the pulsatile endometrial release of the luteolytic hormone prostaglandin F2-alpha, hindering the regression of the corpus luteum (luteolysis) and therefore a return to ovarian cyclicity. This, and a possible direct effect of IFN-tau on prostaglandin synthesis, leads in turn to continued ovarian progesterone secretion, which stimulates the secretion by the endometrium of the nutrients required for the growth of the conceptus. In summary, displays particularly high antiviral and antiproliferative potency concurrently with particular weak cytotoxicity, high antiluteolytic activity and immunomodulatory properties. In contrast with other IFNs, IFN-tau is not virally inducible. The protein is Interferon tau (IFNT) of Giraffa camelopardalis (Giraffe).